We begin with the raw amino-acid sequence, 284 residues long: Pantothenate synthetase (284 aa).

30-37 (MGNLHDGH) is an ATP binding site. Residue histidine 37 is the Proton donor of the active site. A (R)-pantoate-binding site is contributed by glutamine 61. Beta-alanine is bound at residue glutamine 61. 149–152 (GEKD) contacts ATP. Glutamine 155 is a binding site for (R)-pantoate. Residues isoleucine 178 and 186–189 (LSSR) each bind ATP.

It belongs to the pantothenate synthetase family. In terms of assembly, homodimer.

It is found in the cytoplasm. The enzyme catalyses (R)-pantoate + beta-alanine + ATP = (R)-pantothenate + AMP + diphosphate + H(+). Its pathway is cofactor biosynthesis; (R)-pantothenate biosynthesis; (R)-pantothenate from (R)-pantoate and beta-alanine: step 1/1. Functionally, catalyzes the condensation of pantoate with beta-alanine in an ATP-dependent reaction via a pantoyl-adenylate intermediate. The sequence is that of Pantothenate synthetase from Salmonella paratyphi B (strain ATCC BAA-1250 / SPB7).